Here is a 201-residue protein sequence, read N- to C-terminus: Recombination protein RecR (201 aa).

Residues 60–75 form a C4-type zinc finger; it reads CKSCGNIDTRNPCTVC. The region spanning 83–178 is the Toprim domain; that stretch reads SIIVVVADVA…KVTRLAHGVP (96 aa).

Belongs to the RecR family.

In terms of biological role, may play a role in DNA repair. It seems to be involved in an RecBC-independent recombinational process of DNA repair. It may act with RecF and RecO. The polypeptide is Recombination protein RecR (Rhodopseudomonas palustris (strain BisB5)).